The chain runs to 159 residues: Ribosomal RNA large subunit methyltransferase H (159 aa).

Residues Leu-76, Gly-108, and 127-132 contribute to the S-adenosyl-L-methionine site; that span reads FSKMTF.

This sequence belongs to the RNA methyltransferase RlmH family. As to quaternary structure, homodimer.

It localises to the cytoplasm. It catalyses the reaction pseudouridine(1915) in 23S rRNA + S-adenosyl-L-methionine = N(3)-methylpseudouridine(1915) in 23S rRNA + S-adenosyl-L-homocysteine + H(+). Its function is as follows. Specifically methylates the pseudouridine at position 1915 (m3Psi1915) in 23S rRNA. This chain is Ribosomal RNA large subunit methyltransferase H, found in Clostridium botulinum (strain 657 / Type Ba4).